The following is a 76-amino-acid chain: Small ribosomal subunit protein bS18 (76 aa).

It belongs to the bacterial ribosomal protein bS18 family. As to quaternary structure, part of the 30S ribosomal subunit. Forms a tight heterodimer with protein bS6.

Its function is as follows. Binds as a heterodimer with protein bS6 to the central domain of the 16S rRNA, where it helps stabilize the platform of the 30S subunit. The chain is Small ribosomal subunit protein bS18 from Xanthomonas campestris pv. campestris (strain 8004).